A 220-amino-acid polypeptide reads, in one-letter code: Protein-L-isoaspartate O-methyltransferase (220 aa).

Serine 65 is an active-site residue.

It belongs to the methyltransferase superfamily. L-isoaspartyl/D-aspartyl protein methyltransferase family.

It localises to the cytoplasm. The enzyme catalyses [protein]-L-isoaspartate + S-adenosyl-L-methionine = [protein]-L-isoaspartate alpha-methyl ester + S-adenosyl-L-homocysteine. Its function is as follows. Catalyzes the methyl esterification of L-isoaspartyl residues in peptides and proteins that result from spontaneous decomposition of normal L-aspartyl and L-asparaginyl residues. It plays a role in the repair and/or degradation of damaged proteins. This chain is Protein-L-isoaspartate O-methyltransferase (pcm), found in Pyrococcus horikoshii (strain ATCC 700860 / DSM 12428 / JCM 9974 / NBRC 100139 / OT-3).